The chain runs to 70 residues: SPbeta prophage-derived uncharacterized HTH-type transcriptional regulator YopO (70 aa).

The region spanning 5–59 (IKQLMVKRGITIEELSRETMIDMQTLNKIIEMPDESDVTTIKLIALVLNVSIDEL) is the HTH cro/C1-type domain. Residues 16–35 (IEELSRETMIDMQTLNKIIE) constitute a DNA-binding region (H-T-H motif).

The polypeptide is SPbeta prophage-derived uncharacterized HTH-type transcriptional regulator YopO (yopO) (Bacillus subtilis (strain 168)).